A 158-amino-acid polypeptide reads, in one-letter code: uncharacterized protein (158 aa).

In terms of domain architecture, Nudix hydrolase spans 3-130 (YLQRVTNCVL…DGHILDFMMK (128 aa)). Residues 34-55 (GKMESGESVRDSVIREYREETG) carry the Nudix box motif. The Mg(2+) site is built by E49 and E53.

This sequence belongs to the Nudix hydrolase family. Mg(2+) serves as cofactor.

This is an uncharacterized protein from Bacillus subtilis (strain 168).